Consider the following 481-residue polypeptide: GDP-fucose protein O-fucosyltransferase 2 (481 aa).

The signal sequence occupies residues 1-22 (MKGRAHIWVALLLACLPPRFRN). GDP-beta-L-fucose is bound by residues 59 to 63 (GEGFN), 287 to 289 (HLR), Asp365, and 382 to 383 (RF). Glu60 serves as the catalytic Proton acceptor.

It belongs to the glycosyltransferase 68 family.

The protein resides in the endoplasmic reticulum. It carries out the reaction L-seryl-[protein] + GDP-beta-L-fucose = 3-O-(alpha-L-fucosyl)-L-seryl-[protein] + GDP + H(+). The catalysed reaction is L-threonyl-[protein] + GDP-beta-L-fucose = 3-O-(alpha-L-fucosyl)-L-threonyl-[protein] + GDP + H(+). The protein operates within protein modification; protein glycosylation. Functionally, catalyzes the reaction that attaches fucose through an O-glycosidic linkage to a conserved serine or threonine residue in the consensus sequence C1-X-X-S/T-C2 of thrombospondin type I repeats (TSRs) where C1 and C2 are the first and second cysteines of the repeat, respectively. O-fucosylates sporozoite proteins CSP and TRAP. O-fucosylation regulates stability and intracellular trafficking of TRAP but not of CSP. Probably by regulating protein O-fucosylation, may play a role in parasite transmission to the mosquito vector and/or infection of the vertebrate host hepatocytes; however, POFUT2 involvement in transmission/infection is controversial. The polypeptide is GDP-fucose protein O-fucosyltransferase 2 (Plasmodium vivax (strain Salvador I)).